We begin with the raw amino-acid sequence, 34 residues long: MSDIN-like toxin proprotein 5 (34 aa).

Residues 1 to 10 (MSDINTARLP) constitute a propeptide that is removed on maturation. The cyclopeptide (Tyr-Pro) cross-link spans 11 to 20 (YVVFMSFIPP). The propeptide occupies 21–34 (CVNDDIQVVLTRGE).

The protein belongs to the MSDIN fungal toxin family. Processed by the macrocyclase-peptidase enzyme POPB to yield a toxic cyclic decapeptide. POPB first removes 10 residues from the N-terminus. Conformational trapping of the remaining peptide forces the enzyme to release this intermediate rather than proceed to macrocyclization. The enzyme rebinds the remaining peptide in a different conformation and catalyzes macrocyclization of the N-terminal 10 residues.

Its function is as follows. Probable toxin that belongs to the MSDIN-like toxin family responsible for a large number of food poisoning cases and deaths. In Amanita bisporigera (Destroying angel), this protein is MSDIN-like toxin proprotein 5.